A 227-amino-acid polypeptide reads, in one-letter code: MEAMNMNIPRDAMFVPPPESEQNGYHEKSEVQQTSYMQSQVKVPHYNFPTPYFTTSFSAQELLGEGFQASISRISAVTEDMQSMEIPEFVEEARRDYAAKTRENEMLGQQYEKELERKSEAYRKHQEVEADKIRKELEKQHMRDIEFRKEIAELAIENQKRMIDLECRYAKKDMDRERTKVRMMLEQQKFHSDIQVNLDSSAAGTESGGHVVSQSEKFTERNREMKR.

Positions 1 to 28 (MEAMNMNIPRDAMFVPPPESEQNGYHEK) are disordered. The stretch at 90–140 (VEEARRDYAAKTRENEMLGQQYEKELERKSEAYRKHQEVEADKIRKELEKQ) forms a coiled coil. CAHS motif regions lie at residues 122-140 (YRKH…LEKQ) and 159-177 (QKRM…MDRE). The disordered stretch occupies residues 198–227 (LDSSAAGTESGGHVVSQSEKFTERNREMKR). Positions 217-227 (KFTERNREMKR) are enriched in basic and acidic residues.

This sequence belongs to the Cytosolic-abundant heat soluble protein (CAHS) family.

It localises to the cytoplasm. In terms of biological role, CAHS proteins are cytosolic heat soluble proteins that seem to contribute to the anhydrobiosis in tardigrades, but their specific mechanisms are yet to be identified. It is possible that protection during anhydrobiosis might occur via the stabilization of vitrifying small molecules such as sugars, but not via the direct glass transition of CAHS proteins themselves. This is Cytosolic-abundant heat soluble protein 106094 from Paramacrobiotus richtersi (Water bear).